The following is a 111-amino-acid chain: MSSKIIKENKRLVLDLYKRCLYSAKRCPKYQNQMMMESYIKLKFRSNKEIHQKDFETIENLLKQGEEELKSMNDFHELRAKSKSGQDHESILNDCFDDDFNYIGSTPTVKK.

This sequence belongs to the complex I LYR family. SDHAF1 subfamily. As to quaternary structure, interacts with the iron-sulfur protein subunit within the SDH catalytic dimer.

It is found in the mitochondrion matrix. Its function is as follows. Plays an essential role in the assembly of succinate dehydrogenase (SDH), an enzyme complex (also referred to as respiratory complex II) that is a component of both the tricarboxylic acid (TCA) cycle and the mitochondrial electron transport chain, and which couples the oxidation of succinate to fumarate with the reduction of ubiquinone (coenzyme Q) to ubiquinol. Promotes maturation of the iron-sulfur protein subunit of the SDH catalytic dimer, protecting it from the deleterious effects of oxidants. May act together with SDHAF3. The protein is Succinate dehydrogenase assembly factor 1B, mitochondrial of Dictyostelium discoideum (Social amoeba).